Here is a 1177-residue protein sequence, read N- to C-terminus: MRRAGRSRQFSSVEEAFSTSAARPGPRGRRSGRENTAKFVPATLSASTSFSRIEGISSRSVTLASPGSRSGSGPRSGPRLGPRNRSTSRYRWVPAAAGWTVGVIATVSLLGSVSPLIRYLIKVPREFINDYLFNFPDTSIAWSFVLALLAAALTARKRIAWLLLLGNMILAAALNVADIAAGDNTAAEIFGENLGFAVHIVAIVLLVLAYREFWAKVRKGALVKAAAVLVAGDVVGILVSWGLVELFPGTLARQDRLPYVVNRVVGFALADPDLFTGRPHVFLNAIFGLFGALALIMATIVLFQSQRAENALTGEDESAIRGLLELYGKNDSLGYFATRRDKSVVFAQSGRAAITYRVEIGVCLASGDPIGDPRAWPQAVDAWLGLCQTYGWAPGVMGASTQGARTYREAGLNALELGDEAILRTSEFKLSGPDMRGVRQAVTRARRAGLTVRIRRHRDISPEAMADTIARADAWRDTQTERGFSMALGRLGDPADGDCLLVEAIDRDGSVVAMLSLVPWGTTGVSLDLMRRSPSSPNGTIELMVSELALNAESLGITRISLNFAMFRSAFEQGAQLGAGPVARLWRGLLLFFSRWWQLETLYRSNMKYQPDWVPRYACYEDARLIPRVGVASVIAEGFLVLPFSRRDKVHTGHHPAVPARLAQSGLLHHDGSAPDVSGLRPERTDAEEARSRLPEQVRVRLAKLKVLQRNGVDAYPVGCPPSHTVAQALDADDQQDITVAGRILRIRDFGGVLFAQLRDWSGEMQVLLDNSRLERGRTADFTAAIDLGDLVEVSGQMGFSKKGTRSLIVTDWRMIGKCLRPLPNKWKGLTDPEARVRTRYVDLAVNPESRELIAARSEVLRSVRQTLFAKGFIEVETPILQQIHGGATARPFVTHINTYDMDLFLRIAPELYLKRLCVGGVERVFELGRAFRNEGVDFSHNPEFTLLEAYQAHADYRVWIDGCRELIQNAAQAAHGEQTVLRPGADGRLQPVDISGIWAVKTVHDAVSEALGEQVDPGTSLSTLRKLSDAARIPYRAHWDAGAVVLELYEHLVEDRTEEPTFYVDFPTSVSPLTRPHRSRPGVAERWDLVAWGVELATAYSELTDPVEQRRRLQEQSLLAAGGDPEAMELDEDFLQAMEYAMPPTGGLGMGVDRLVMLITGRSIRETLPFPLAKPH.

Disordered stretches follow at residues 1–40 (MRRA…AKFV) and 61–85 (VTLA…PRNR). The segment at 1 to 676 (MRRAGRSRQF…LLHHDGSAPD (676 aa)) is phosphatidylglycerol lysyltransferase. Residues 65–85 (SPGSRSGSGPRSGPRLGPRNR) are compositionally biased toward low complexity. Transmembrane regions (helical) follow at residues 93-113 (VPAA…LGSV), 135-155 (FPDT…ALTA), 159-179 (IAWL…VADI), 189-209 (IFGE…LVLA), 227-247 (AVLV…VELF), and 281-301 (VFLN…ATIV). The tract at residues 673-693 (SAPDVSGLRPERTDAEEARSR) is disordered. Positions 677-1177 (VSGLRPERTD…TLPFPLAKPH (501 aa)) are lysine--tRNA ligase. Basic and acidic residues predominate over residues 681–693 (RPERTDAEEARSR). Positions 738–816 (ITVAGRILRI…SLIVTDWRMI (79 aa)) form a DNA-binding region, OB. Mg(2+)-binding residues include aspartate 1089 and glutamate 1096.

This sequence in the N-terminal section; belongs to the LPG synthetase family. It in the C-terminal section; belongs to the class-II aminoacyl-tRNA synthetase family. The cofactor is Mg(2+).

The protein localises to the cell membrane. It catalyses the reaction tRNA(Lys) + L-lysine + ATP = L-lysyl-tRNA(Lys) + AMP + diphosphate. The enzyme catalyses L-lysyl-tRNA(Lys) + a 1,2-diacyl-sn-glycero-3-phospho-(1'-sn-glycerol) = a 1,2-diacyl-sn-glycero-3-phospho-1'-(3'-O-L-lysyl)-sn-glycerol + tRNA(Lys). Functionally, catalyzes the production of L-lysyl-tRNA(Lys)transfer and the transfer of a lysyl group from L-lysyl-tRNA(Lys) to membrane-bound phosphatidylglycerol (PG), which produces lysylphosphatidylglycerol (LPG), one of the components of the bacterial membrane with a positive net charge. LPG synthesis contributes to the resistance to cationic antimicrobial peptides (CAMPs) and likely protects M.tuberculosis against the CAMPs produced by competiting microorganisms (bacteriocins). In fact, the modification of anionic phosphatidylglycerol with positively charged L-lysine results in repulsion of the peptides. The sequence is that of Lysylphosphatidylglycerol biosynthesis bifunctional protein LysX (lysX) from Mycolicibacterium paratuberculosis (strain ATCC BAA-968 / K-10) (Mycobacterium paratuberculosis).